The chain runs to 134 residues: Small ribosomal subunit protein uS11 (134 aa).

The protein belongs to the universal ribosomal protein uS11 family. As to quaternary structure, part of the 30S ribosomal subunit. Interacts with proteins S7 and S18. Binds to IF-3.

Located on the platform of the 30S subunit, it bridges several disparate RNA helices of the 16S rRNA. Forms part of the Shine-Dalgarno cleft in the 70S ribosome. This Parafrankia sp. (strain EAN1pec) protein is Small ribosomal subunit protein uS11.